Reading from the N-terminus, the 968-residue chain is RNA polymerase-associated protein RapA (968 aa).

Residues 164-334 (DVGRRHAPRV…FARLRLLDPN (171 aa)) form the Helicase ATP-binding domain. Residue 177–184 (DEVGLGKT) participates in ATP binding. The DEAH box motif lies at 280-283 (DEAH). The Helicase C-terminal domain maps to 490–685 (RVEWLMGYLT…ALKAQLEQGR (196 aa)).

Belongs to the SNF2/RAD54 helicase family. RapA subfamily. In terms of assembly, interacts with the RNAP. Has a higher affinity for the core RNAP than for the holoenzyme. Its ATPase activity is stimulated by binding to RNAP.

Transcription regulator that activates transcription by stimulating RNA polymerase (RNAP) recycling in case of stress conditions such as supercoiled DNA or high salt concentrations. Probably acts by releasing the RNAP, when it is trapped or immobilized on tightly supercoiled DNA. Does not activate transcription on linear DNA. Probably not involved in DNA repair. This chain is RNA polymerase-associated protein RapA, found in Salmonella schwarzengrund (strain CVM19633).